Here is a 329-residue protein sequence, read N- to C-terminus: MAIIGAGPVGLFTVFQAGMLGMSACVIDALSEVGGQCAVLYPEKPIYDIPAYPVTLARDLVNNLKRQADPFKPTYLLGHTAEQVLEEGEHFVVVTDKKVGVRCRAIVIAAGSGGFGPNRPPLDGITEYEDKSVFYHVSDVSRFRGKRVVIAGGGDSAADWAVSLSEVADSVHVIHRRHSFRCAPNTLRNLESLAERGQIKLLVPYQLAGLAGSDGMLNGVIIRNISSKEETRIDADFLLPFFGISAKLGPIANWGLGVESFYIPIDQSTCRTARTRIYAVGDVAHYQGKLKLILVGFSESALACHDIYKVLFPETPLNFQYSTSKKMPC.

Asp-28, Gln-36, Tyr-41, Ala-81, Phe-115, Asp-282, and Thr-323 together coordinate FAD.

Belongs to the ferredoxin--NADP reductase type 2 family. As to quaternary structure, homodimer. FAD is required as a cofactor.

The enzyme catalyses 2 reduced [2Fe-2S]-[ferredoxin] + NADP(+) + H(+) = 2 oxidized [2Fe-2S]-[ferredoxin] + NADPH. The polypeptide is Ferredoxin--NADP reductase (Anaplasma marginale (strain St. Maries)).